We begin with the raw amino-acid sequence, 185 residues long: Ribosome-recycling factor (185 aa).

Belongs to the RRF family.

Its subcellular location is the cytoplasm. Functionally, responsible for the release of ribosomes from messenger RNA at the termination of protein biosynthesis. May increase the efficiency of translation by recycling ribosomes from one round of translation to another. This chain is Ribosome-recycling factor, found in Salmonella arizonae (strain ATCC BAA-731 / CDC346-86 / RSK2980).